We begin with the raw amino-acid sequence, 419 residues long: Gamma-glutamyl phosphate reductase (419 aa).

It belongs to the gamma-glutamyl phosphate reductase family.

Its subcellular location is the cytoplasm. It catalyses the reaction L-glutamate 5-semialdehyde + phosphate + NADP(+) = L-glutamyl 5-phosphate + NADPH + H(+). It functions in the pathway amino-acid biosynthesis; L-proline biosynthesis; L-glutamate 5-semialdehyde from L-glutamate: step 2/2. In terms of biological role, catalyzes the NADPH-dependent reduction of L-glutamate 5-phosphate into L-glutamate 5-semialdehyde and phosphate. The product spontaneously undergoes cyclization to form 1-pyrroline-5-carboxylate. This is Gamma-glutamyl phosphate reductase from Caldicellulosiruptor bescii (strain ATCC BAA-1888 / DSM 6725 / KCTC 15123 / Z-1320) (Anaerocellum thermophilum).